The following is a 240-amino-acid chain: DNA repair protein RecO (240 aa).

Belongs to the RecO family.

Involved in DNA repair and RecF pathway recombination. In Actinobacillus pleuropneumoniae serotype 3 (strain JL03), this protein is DNA repair protein RecO.